The primary structure comprises 247 residues: Carboxy-S-adenosyl-L-methionine synthase (247 aa).

Residues tyrosine 40, 65–67 (GAS), 90–91 (DN), 122–123 (DI), asparagine 137, and arginine 204 each bind S-adenosyl-L-methionine.

It belongs to the class I-like SAM-binding methyltransferase superfamily. Cx-SAM synthase family. In terms of assembly, homodimer.

It catalyses the reaction prephenate + S-adenosyl-L-methionine = carboxy-S-adenosyl-L-methionine + 3-phenylpyruvate + H2O. Catalyzes the conversion of S-adenosyl-L-methionine (SAM) to carboxy-S-adenosyl-L-methionine (Cx-SAM). This Pseudomonas fluorescens (strain Pf0-1) protein is Carboxy-S-adenosyl-L-methionine synthase.